The sequence spans 273 residues: MNLDNAIHEAAKVLAGASRAAVFSGAGVSAESGIPTFRDPGGVWDRLNPAEVGDTQGLLASLEKNPEKLVAMFMELLAVFDAAIPNPGHRALFDLERMGILQAVITQNIDNLHQEAGNTQVIEMHGNGFRFRCLKCRSRRSHERHALIGRVKERLSTLPDFSPASIFAAMPDCDLCGSGMRPDVVMFGETVMEVENAFAAARSCDVMLALGTSGVVTPAAQIPAEAKASGAKVIVINPNENGFARVCDIYISMKTGQALPRIVEQVKKIRSGS.

The Deacetylase sirtuin-type domain maps to 1-269 (MNLDNAIHEA…PRIVEQVKKI (269 aa)). Residues 25–44 (GAGV…GGVW) and 107–110 (QNID) contribute to the NAD(+) site. Residue histidine 125 is the Proton acceptor of the active site. Residues cysteine 133, cysteine 136, cysteine 173, and cysteine 176 each contribute to the Zn(2+) site. NAD(+)-binding positions include 211–213 (GTS), 237–239 (NPN), and threonine 255.

It belongs to the sirtuin family. Class III subfamily. Requires Zn(2+) as cofactor.

It is found in the cytoplasm. The enzyme catalyses N(6)-acetyl-L-lysyl-[protein] + NAD(+) + H2O = 2''-O-acetyl-ADP-D-ribose + nicotinamide + L-lysyl-[protein]. NAD-dependent protein deacetylase which modulates the activities of several proteins which are inactive in their acetylated form. The polypeptide is NAD-dependent protein deacylase (cobB) (Desulfosudis oleivorans (strain DSM 6200 / JCM 39069 / Hxd3) (Desulfococcus oleovorans)).